A 227-amino-acid chain; its full sequence is Orotidine 5'-phosphate decarboxylase (227 aa).

Substrate is bound by residues D8, K30, 59 to 68, T118, R178, Q187, G207, and R208; that span reads DLKLYDIPYT. The active-site Proton donor is K61.

The protein belongs to the OMP decarboxylase family. Type 1 subfamily. As to quaternary structure, homodimer.

The catalysed reaction is orotidine 5'-phosphate + H(+) = UMP + CO2. Its pathway is pyrimidine metabolism; UMP biosynthesis via de novo pathway; UMP from orotate: step 2/2. Functionally, catalyzes the decarboxylation of orotidine 5'-monophosphate (OMP) to uridine 5'-monophosphate (UMP). This chain is Orotidine 5'-phosphate decarboxylase, found in Helicobacter pylori (strain ATCC 700392 / 26695) (Campylobacter pylori).